The primary structure comprises 480 residues: Ribulose bisphosphate carboxylase large chain (480 aa).

Positions 1-2 are excised as a propeptide; it reads MS. The residue at position 3 (proline 3) is an N-acetylproline. N6,N6,N6-trimethyllysine is present on lysine 14. Positions 123 and 173 each coordinate substrate. The active-site Proton acceptor is lysine 175. Substrate is bound at residue lysine 177. Lysine 201, aspartate 203, and glutamate 204 together coordinate Mg(2+). Lysine 201 carries the N6-carboxylysine modification. Residue histidine 294 is the Proton acceptor of the active site. Residues arginine 295, histidine 327, and serine 379 each coordinate substrate.

Belongs to the RuBisCO large chain family. Type I subfamily. As to quaternary structure, heterohexadecamer of 8 large chains and 8 small chains; disulfide-linked. The disulfide link is formed within the large subunit homodimers. Requires Mg(2+) as cofactor. The disulfide bond which can form in the large chain dimeric partners within the hexadecamer appears to be associated with oxidative stress and protein turnover.

The protein localises to the plastid. It localises to the chloroplast. It catalyses the reaction 2 (2R)-3-phosphoglycerate + 2 H(+) = D-ribulose 1,5-bisphosphate + CO2 + H2O. The enzyme catalyses D-ribulose 1,5-bisphosphate + O2 = 2-phosphoglycolate + (2R)-3-phosphoglycerate + 2 H(+). Its function is as follows. RuBisCO catalyzes two reactions: the carboxylation of D-ribulose 1,5-bisphosphate, the primary event in carbon dioxide fixation, as well as the oxidative fragmentation of the pentose substrate in the photorespiration process. Both reactions occur simultaneously and in competition at the same active site. This chain is Ribulose bisphosphate carboxylase large chain, found in Acorus calamus var. americanus (American sweet flag).